Here is a 148-residue protein sequence, read N- to C-terminus: Aspartate carbamoyltransferase regulatory chain (148 aa).

Zn(2+) contacts are provided by C106, C111, C134, and C137.

Belongs to the PyrI family. Contains catalytic and regulatory chains. It depends on Zn(2+) as a cofactor.

Its function is as follows. Involved in allosteric regulation of aspartate carbamoyltransferase. The polypeptide is Aspartate carbamoyltransferase regulatory chain (Methanococcus maripaludis (strain C6 / ATCC BAA-1332)).